An 801-amino-acid polypeptide reads, in one-letter code: Phenylalanine--tRNA ligase beta subunit (801 aa).

The 115-residue stretch at 39–153 folds into the tRNA-binding domain; sequence AEGLSKLVVG…DEAVPGDAIF (115 aa). In terms of domain architecture, B5 spans 406-481; it reads TEPVEVSTNL…RIYGYDKLPT (76 aa). The Mg(2+) site is built by D459, D465, E468, and E469. An FDX-ACB domain is found at 708–801; sequence TKFPAMTRDI…LTEQVGAEVR (94 aa).

The protein belongs to the phenylalanyl-tRNA synthetase beta subunit family. Type 1 subfamily. As to quaternary structure, tetramer of two alpha and two beta subunits. Mg(2+) is required as a cofactor.

It is found in the cytoplasm. It carries out the reaction tRNA(Phe) + L-phenylalanine + ATP = L-phenylalanyl-tRNA(Phe) + AMP + diphosphate + H(+). This chain is Phenylalanine--tRNA ligase beta subunit, found in Streptococcus pyogenes serotype M3 (strain SSI-1).